We begin with the raw amino-acid sequence, 453 residues long: Ubiquitin-associated protein 1 (453 aa).

The 47-residue stretch at 19 to 65 folds into the UMA domain; sequence LDDVPFKLNEKFRCPSKVGLPIGFCLSDCNAILSDLQYDFNLERRTV. Positions 83 to 93 are enriched in basic and acidic residues; it reads EAIRTDSESER. Disordered regions lie at residues 83–119, 189–223, and 260–335; these read EAIR…QDIV, LQSQ…AKTG, and FPKL…AGTT. A compositionally biased stretch (low complexity) spans 189-199; that stretch reads LQSQPQSSVSP. Over residues 285 to 328 the composition is skewed to polar residues; it reads NLSNGTPPSLQRTASNNNTTLPQEQPVFAQNGTPKQSNPVTVTS. 2 UBA domains span residues 340–381 and 403–449; these read SPSE…LFTH and GSEE…LMTR.

As to quaternary structure, component of an ESCRT-I complex (endosomal sorting complex required for transport I).

Its subcellular location is the cytoplasm. The protein localises to the cytosol. It localises to the endosome. Component of the ESCRT-I complex, a regulator of vesicular trafficking process. Binds to ubiquitinated cargo proteins and is required for the sorting of endocytic ubiquitinated cargos into multivesicular bodies (MVBs). The chain is Ubiquitin-associated protein 1 from Danio rerio (Zebrafish).